Here is a 277-residue protein sequence, read N- to C-terminus: Methyltransferase adrK (277 aa).

Residues 123 to 124 (DL), 150 to 151 (DV), and 151 to 152 (VL) contribute to the S-adenosyl-L-methionine site.

This sequence belongs to the class I-like SAM-binding methyltransferase superfamily. As to quaternary structure, homodimer.

The protein operates within secondary metabolite biosynthesis; terpenoid biosynthesis. Functionally, methyltransferase; part of the gene cluster that mediates the biosynthesis of andrastins, meroterpenoid compounds that exhibit inhibitory activity against ras farnesyltransferase, suggesting that they could be promising leads for antitumor agents. The first step of the pathway is the synthesis of 3,5-dimethylorsellinic acid (DMOA) by the polyketide synthase adrD via condensation of one acetyl-CoA starter unit with 3 malonyl-CoA units and 2 methylations. DMAO is then converted to farnesyl-DMAO by the prenyltransferase adrG. The methyltransferase adrK catalyzes the methylation of the carboxyl group of farnesyl-DMAO to farnesyl-DMAO methyl ester which is further converted to epoxyfarnesyl-DMAO methyl ester by the FAD-dependent monooxygenase adrH. The terpene cyclase adrI then catalyzes the carbon skeletal rearrangement to generate the andrastin E, the first compound in the pathway having the andrastin scaffold, with the tetracyclic ring system. The post-cyclization tailoring enzymes adrF, adrE, adrJ, and adrA, are involved in the conversion of andrastin E into andrastin A. The short chain dehydrogenase adrF is responsible for the oxidation of the C-3 a hydroxyl group of andrastin E to yield the corresponding ketone, andrastin D. The ketoreductase adrE stereoselectively reduces the carbonyl moiety to reverse the stereochemistry of the C-3 position to yield andrastin F. The acetyltransferase adrJ is the acetyltransferase that attaches the acetyl group to the C-3 hydroxyl group of andrastin F to yield andrastin C. Finally, the cytochrome P450 monooxygenase adrA catalyzes two sequential oxidation reactions of the C-23 methyl group, to generate the corresponding alcohol andrastin B, and aldehyde andrastin A. This chain is Methyltransferase adrK, found in Penicillium rubens (strain ATCC 28089 / DSM 1075 / NRRL 1951 / Wisconsin 54-1255) (Penicillium chrysogenum).